Consider the following 350-residue polypeptide: MAAAGPAAGPTGPEPMPSYAQLVQRGWGSALAAARGCTDCGWGLARRGLAEHAHLAPPELLLLALGALGWTALRSAATARLFRPLAKRCCLQPRDAAKMPESAWKFLFYLGSWSYSAYLLFGTDYPFFHDPPSVFYDWTPGMAVPRDIAAAYLLQGSFYGHSIYATLYMDTWRKDSVVMLLHHVVTLILIVSSYAFRYHNVGILVLFLHDISDVQLEFTKLNIYFKSRGGSYHRLHALAADLGCLSFGFSWFWFRLYWFPLKVLYATSHCSLRTVPDIPFYFFFNALLLLLTLMNLYWFLYIVAFAAKVLTGQVHELKDLREYDTAEAQSLKPSKAEKPLRNGLVKDKRF.

A2 is subject to N-acetylalanine. A run of 6 helical transmembrane segments spans residues 53 to 73 (AHLA…WTAL), 103 to 123 (AWKF…LFGT), 148 to 168 (IAAA…ATLY), 176 to 196 (SVVM…SYAF), 239 to 259 (AADL…LYWF), and 287 to 307 (LLLL…AFAA). Residues 97–311 (AKMPESAWKF…IVAFAAKVLT (215 aa)) enclose the TLC domain.

In terms of processing, acetylated. Deacetylation by SIRT3 increases enzyme activity and promotes mitochondrial ceramide accumulation.

It is found in the endoplasmic reticulum membrane. The catalysed reaction is a sphingoid base + octadecanoyl-CoA = an N-octadecanoyl-sphingoid base + CoA + H(+). It carries out the reaction sphinganine + octadecanoyl-CoA = N-(octadecanoyl)-sphinganine + CoA + H(+). It catalyses the reaction hexadecasphinganine + octadecanoyl-CoA = N-octadecanoylhexadecasphinganine + CoA + H(+). The enzyme catalyses sphing-4-enine + octadecanoyl-CoA = N-octadecanoylsphing-4-enine + CoA + H(+). The catalysed reaction is heptadecasphing-4-enine + octadecanoyl-CoA = N-octadecanoyl-heptadecasphing-4-enine + CoA + H(+). It carries out the reaction 2-hydroxyoctadecanoyl-CoA + sphinganine = N-(2-hydroxyoctadecanoyl)-sphinganine + CoA + H(+). It catalyses the reaction eicosanoyl-CoA + sphinganine = N-eicosanoylsphinganine + CoA + H(+). The protein operates within lipid metabolism; sphingolipid metabolism. Its activity is regulated as follows. Inhibited by fumonisin B1. Ceramide synthase that catalyzes the transfer of the acyl chain from acyl-CoA to a sphingoid base, with high selectivity toward stearoyl-CoA (octadecanoyl-CoA; C18:0-CoA). N-acylates sphinganine and sphingosine bases to form dihydroceramides and ceramides in de novo synthesis and salvage pathways, respectively. Plays a predominant role in skeletal muscle in regulating C18 ceramide and dihydroceramide levels with an impact on whole-body glucose metabolism and insulin sensitivity. Protects from diet-induced obesity by suppressing the uptake of glucose in multiple organs in a FGF21-dependent way. Generates C18 ceramides in the brain, playing a critical role in cerebellar development and Purkinje cell function. In response to cellular stress mediates mitophagy, a known defense mechanism against cell transformation and aging. Upon mitochondria fission, generates C18 ceramides that anchor lipidated MAP1LC3B/LC3B-II autophagolysosomes to outer mitochondrial membranes to eliminate damaged mitochondria. This Homo sapiens (Human) protein is Ceramide synthase 1.